Reading from the N-terminus, the 2284-residue chain is RNA1 polyprotein (2284 aa).

Residues 567–1172 (CTAEEIFRMH…LVENYSLLLT (606 aa)) are Cytoplasmic-facing. The SF3 helicase domain occupies 750-918 (VSKLEEVHQR…DNTHFTPRAY (169 aa)). 780 to 787 (GASQSGKT) serves as a coordination point for ATP. Residues 1173 to 1193 (LVAILVLIATAYSLISTLIGL) traverse the membrane as a helical segment. The Lumenal portion of the chain corresponds to 1194–1216 (AGCSSFAGGMVALNHVSNASIPC). S1217 bears the O-(5'-phospho-RNA)-serine mark. Residues 1242–1457 (GPAQGQGDHE…SVIPSYSSSF (216 aa)) form the Peptidase C3 domain. Residues H1283, E1327, and C1419 each act as for picornain 3C-like protease activity in the active site. A RdRp catalytic domain is found at 1727–1851 (DVGYNCDYKG…TVSQSIMTSF (125 aa)).

The protein belongs to the nepoviruses RNA1 polyprotein family. Specific enzymatic cleavages by picornain 3C-like protease in vivo yield mature proteins. Picornain 3C-like protease is autocatalytically processed. Post-translationally, VPg is uridylylated by the polymerase and is covalently linked to the 5'-end of genomic RNA. This uridylylated form acts as a nucleotide-peptide primer for the polymerase.

It localises to the host endoplasmic reticulum lumen. The protein localises to the host endoplasmic reticulum membrane. The catalysed reaction is RNA(n) + a ribonucleoside 5'-triphosphate = RNA(n+1) + diphosphate. Functionally, picornain 3C-like protease is a thiol protease that cleaves the P1 and P2 polyproteins. The sequence is that of RNA1 polyprotein from Vitis vinifera (Grape).